The chain runs to 108 residues: Small proline-rich protein 5 (108 aa).

Positions 1 to 13 (MSQQKQKQCAPPQ) are enriched in low complexity. Disordered stretches follow at residues 1-24 (MSQQKQKQCAPPQQCCPPPQQRCP) and 73-108 (PPPQQTKQPCQPPPKCQEPCAPKCPPPQQCQTSKQK). 2 stretches are compositionally biased toward pro residues: residues 14–24 (QCCPPPQQRCP) and 73–100 (PPPQQTKQPCQPPPKCQEPCAPKCPPPQ).

Its function is as follows. Positively regulates keratinocyte differentiation by inducing genes associated with epidermal differentiation. This is Small proline-rich protein 5 from Homo sapiens (Human).